The sequence spans 473 residues: Proline transporter 1 (473 aa).

The segment covering M1–Q11 has biased composition (basic and acidic residues). The segment at M1–E31 is disordered. 11 consecutive transmembrane segments (helical) span residues P65–Y85, S88–I108, L145–A165, I188–L208, I210–S230, I252–P272, L290–W310, V333–M353, V378–L398, F401–M421, and W437–V457.

Belongs to the amino acid/polyamine transporter 2 family. Amino acid/auxin permease (AAAP) (TC 2.A.18.3) subfamily. As to expression, expressed in roots, leaf blades and sheaths, stems and young panicle.

It is found in the cell membrane. Its function is as follows. Proline transporter that mediates proline transport across the plasma membrane when expressed in a heterologous system (Xenopus oocytes). This is Proline transporter 1 (PROT1) from Oryza sativa subsp. japonica (Rice).